Reading from the N-terminus, the 488-residue chain is Zinc metalloproteinase-disintegrin VMP-II (488 aa).

A signal peptide spans 1–20; the sequence is MIQVLLVTICLAVFPYQGSS. Positions 21 to 191 are excised as a propeptide; it reads IILESGNVND…KASQSNIPPE (171 aa). Residues 198–396 enclose the Peptidase M12B domain; it reads RYIELVVVAD…STTRCLHNEP (199 aa). Ca(2+) contacts are provided by E201 and D285. An N-linked (GlcNAc...) asparagine glycan is attached at N296. 3 disulfide bridges follow: C309–C391, C349–C373, and C351–C356. Residue H334 coordinates Zn(2+). The active site involves E335. Zn(2+)-binding residues include H338 and H344. Ca(2+) contacts are provided by C391, N394, N409, E413, E416, and D419. Residues 404–488 form the Disintegrin domain; sequence PPFCGNYFKE…ADCPRNGLYG (85 aa). 7 cysteine pairs are disulfide-bonded: C407–C426, C418–C436, C420–C431, C430–C453, C444–C450, C449–C474, and C462–C481. The Cell attachment site motif lies at 466–468; sequence RGD.

Belongs to the venom metalloproteinase (M12B) family. P-II subfamily. P-IIb sub-subfamily. In terms of assembly, homodimer; disulfide-linked (disintegrin). The cofactor is Zn(2+). Expressed by the venom gland.

The protein resides in the secreted. Functionally, zinc metalloproteinase-disintegrin VMP-II: inhibits ADP-induced platelet aggregation (probably by binding integrin alpha-IIb/beta-3 (ITGA2B/ITGB3)) and degrades fibrinogen. Recombinant disintegrin r-Cam-dis (413-488): this recombinant protein inhibits platelet adhesion to fibrinogen (IC(50) is 1 nM), inhibits collagen- (IC(50) is 18 nM) and ADP-induced (IC(50) is 6 nM) platelet aggregation, and also inhibits platelet function on clot retraction. May act by binding integrin alpha-IIb/beta-3 (ITGA2B/ITGB3). In Crotalus adamanteus (Eastern diamondback rattlesnake), this protein is Zinc metalloproteinase-disintegrin VMP-II.